Consider the following 71-residue polypeptide: UPF0346 protein SMU_1621c (71 aa).

It belongs to the UPF0346 family.

This chain is UPF0346 protein SMU_1621c, found in Streptococcus mutans serotype c (strain ATCC 700610 / UA159).